Here is a 146-residue protein sequence, read N- to C-terminus: UPF0178 protein LMOf2365_1475 (146 aa).

It belongs to the UPF0178 family.

This Listeria monocytogenes serotype 4b (strain F2365) protein is UPF0178 protein LMOf2365_1475.